The chain runs to 552 residues: Rhodopsin kinase GRK7 (552 aa).

Ser36 is modified (phosphoserine; by PKA). In terms of domain architecture, RGS spans 56 to 176 (FHSLCEQQPI…LASPFYDKFL (121 aa)). The Protein kinase domain occupies 191–454 (FEEFRVLGKG…SDDPRKHHFF (264 aa)). ATP-binding positions include 197–205 (LGKGGFGEV) and Lys220. The Proton acceptor role is filled by Asp316. Residues 455-520 (KTINFPRLEA…GAVPIAWQEE (66 aa)) form the AGC-kinase C-terminal domain. The residue at position 549 (Cys549) is a Cysteine methyl ester. Cys549 carries S-geranylgeranyl cysteine lipidation. The propeptide at 550–552 (LLL) is removed in mature form.

The protein belongs to the protein kinase superfamily. AGC Ser/Thr protein kinase family. GPRK subfamily. As to quaternary structure, interacts (when prenylated) with PDE6D; this promotes release from membranes. Post-translationally, autophosphorylated in vitro at Ser-490. Phosphorylation at Ser-36 is regulated by light and activated by cAMP.

The protein localises to the membrane. The catalysed reaction is L-threonyl-[rhodopsin] + ATP = O-phospho-L-threonyl-[rhodopsin] + ADP + H(+). It catalyses the reaction L-seryl-[rhodopsin] + ATP = O-phospho-L-seryl-[rhodopsin] + ADP + H(+). With respect to regulation, inhibited by phosphorylation of Ser-36. In terms of biological role, retina-specific kinase involved in the shutoff of the photoresponse and adaptation to changing light conditions via cone opsin phosphorylation, including rhodopsin (RHO). The sequence is that of Rhodopsin kinase GRK7 (GRK7) from Bos taurus (Bovine).